The following is a 229-amino-acid chain: Rhamnosyl O-methyltransferase (229 aa).

The N-terminal stretch at 1–23 is a signal peptide; that stretch reads MERVRQMFSCVSGMIYRPTDSIA.

The protein belongs to the rhamnosyl O-methyltransferase family.

Catalyzes the O-methylation of the hydroxyl group located on C-2 of the first rhamnosyl residue linked to the phenolic group of glycosylated phenolphthiocerol dimycocerosates (PGL) and p-hydroxybenzoic acid derivatives (p-HBAD). This Mycobacterium leprae (strain TN) protein is Rhamnosyl O-methyltransferase.